An 858-amino-acid polypeptide reads, in one-letter code: Bifunctional uridylyltransferase/uridylyl-removing enzyme (858 aa).

Positions 1–324 (MSASVAEPPP…PATSGVTRVL (324 aa)) are uridylyltransferase. A uridylyl-removing region spans residues 325–681 (SPGRFVEKQG…ARPSPVGDAL (357 aa)). In terms of domain architecture, HD spans 443-565 (VDQHILMVLR…VGSERRLTAL (123 aa)). ACT domains lie at 682–761 (QVLV…PEPS) and 790–858 (ILSV…AIAV).

The protein belongs to the GlnD family. Mg(2+) is required as a cofactor.

It carries out the reaction [protein-PII]-L-tyrosine + UTP = [protein-PII]-uridylyl-L-tyrosine + diphosphate. The catalysed reaction is [protein-PII]-uridylyl-L-tyrosine + H2O = [protein-PII]-L-tyrosine + UMP + H(+). Its activity is regulated as follows. Uridylyltransferase (UTase) activity is inhibited by glutamine, while glutamine activates uridylyl-removing (UR) activity. Its function is as follows. Modifies, by uridylylation and deuridylylation, the PII regulatory proteins (GlnB and homologs), in response to the nitrogen status of the cell that GlnD senses through the glutamine level. Under low glutamine levels, catalyzes the conversion of the PII proteins and UTP to PII-UMP and PPi, while under higher glutamine levels, GlnD hydrolyzes PII-UMP to PII and UMP (deuridylylation). Thus, controls uridylylation state and activity of the PII proteins, and plays an important role in the regulation of nitrogen assimilation and metabolism. This chain is Bifunctional uridylyltransferase/uridylyl-removing enzyme, found in Burkholderia mallei (strain ATCC 23344).